The sequence spans 336 residues: tRNA-dihydrouridine(20/20a) synthase (336 aa).

FMN-binding positions include 24–26 (PMM) and Gln-77. Cys-107 acts as the Proton donor in catalysis. FMN contacts are provided by residues Lys-146, His-178, 218–220 (NGG), and 240–241 (GR).

This sequence belongs to the Dus family. DusA subfamily. FMN is required as a cofactor.

The enzyme catalyses 5,6-dihydrouridine(20) in tRNA + NADP(+) = uridine(20) in tRNA + NADPH + H(+). The catalysed reaction is 5,6-dihydrouridine(20) in tRNA + NAD(+) = uridine(20) in tRNA + NADH + H(+). It catalyses the reaction 5,6-dihydrouridine(20a) in tRNA + NADP(+) = uridine(20a) in tRNA + NADPH + H(+). It carries out the reaction 5,6-dihydrouridine(20a) in tRNA + NAD(+) = uridine(20a) in tRNA + NADH + H(+). Functionally, catalyzes the synthesis of 5,6-dihydrouridine (D), a modified base found in the D-loop of most tRNAs, via the reduction of the C5-C6 double bond in target uridines. Specifically modifies U20 and U20a in tRNAs. This is tRNA-dihydrouridine(20/20a) synthase from Pseudomonas syringae pv. tomato (strain ATCC BAA-871 / DC3000).